The primary structure comprises 198 residues: Protein hunchback (198 aa).

Disordered regions lie at residues 16–111 and 152–198; these read SHHH…LPGL and NDKL…KYMA. Positions 17–31 are enriched in basic residues; that stretch reads HHHHHHHAHHSHHQH. 2 stretches are compositionally biased toward low complexity: residues 35–46 and 56–83; these read SNSNSNASSPHQ and SNTN…QQQQ. Residues 95–105 show a composition bias toward polar residues; it reads PSPSNNDQNSP. Over residues 179–198 the composition is skewed to basic and acidic residues; it reads EPEKEHDLMSNSSEDMKYMA.

It belongs to the hunchback C2H2-type zinc-finger protein family.

Its subcellular location is the nucleus. Gap class segmentation protein that controls development of head structures. The protein is Protein hunchback (hb) of Drosophila lineosetae (Fruit fly).